A 332-amino-acid polypeptide reads, in one-letter code: Phosphate acyltransferase (332 aa).

Belongs to the PlsX family. In terms of assembly, homodimer. Probably interacts with PlsY.

Its subcellular location is the cytoplasm. It catalyses the reaction a fatty acyl-[ACP] + phosphate = an acyl phosphate + holo-[ACP]. It participates in lipid metabolism; phospholipid metabolism. Functionally, catalyzes the reversible formation of acyl-phosphate (acyl-PO(4)) from acyl-[acyl-carrier-protein] (acyl-ACP). This enzyme utilizes acyl-ACP as fatty acyl donor, but not acyl-CoA. This is Phosphate acyltransferase from Thermoanaerobacter pseudethanolicus (strain ATCC 33223 / 39E) (Clostridium thermohydrosulfuricum).